Reading from the N-terminus, the 227-residue chain is ATP synthase subunit a (227 aa).

The next 6 helical transmembrane spans lie at 14-34 (LLNIPLVLLALIMPWKLFVSF), 69-89 (WVVLFSSLMLMLMTLNVIGLF), 98-118 (QLSMNLGLAVPLWLGTVVYGF), 137-157 (LLVPVLVVVETLSILMRPLAL), 169-189 (HLLMHLISSAVLGLMELSVML), and 205-223 (IAVALIQGYVFAILVTLYL).

The protein belongs to the ATPase A chain family. In terms of assembly, F-type ATPases have 2 components, CF(1) - the catalytic core - and CF(0) - the membrane proton channel. CF(1) has five subunits: alpha(3), beta(3), gamma(1), delta(1), epsilon(1). CF(0) has three main subunits: a, b and c.

The protein resides in the mitochondrion inner membrane. Mitochondrial membrane ATP synthase (F(1)F(0) ATP synthase or Complex V) produces ATP from ADP in the presence of a proton gradient across the membrane which is generated by electron transport complexes of the respiratory chain. F-type ATPases consist of two structural domains, F(1) - containing the extramembraneous catalytic core and F(0) - containing the membrane proton channel, linked together by a central stalk and a peripheral stalk. During catalysis, ATP synthesis in the catalytic domain of F(1) is coupled via a rotary mechanism of the central stalk subunits to proton translocation. Key component of the proton channel; it may play a direct role in the translocation of protons across the membrane. This Branchiostoma floridae (Florida lancelet) protein is ATP synthase subunit a (ATP6).